The sequence spans 157 residues: Endosomal/vacuolar adapter protein YPT35 (157 aa).

The 115-residue stretch at 43–157 (ITDVLVGDYH…SPVITHFILN (115 aa)) folds into the PX domain.

It belongs to the YPT35 family.

It localises to the endosome membrane. The protein localises to the vacuole membrane. Recruits the lipid transfer protein VPS13 to endosomal and vacuolar membranes. The sequence is that of Endosomal/vacuolar adapter protein YPT35 (YPT35) from Debaryomyces hansenii (strain ATCC 36239 / CBS 767 / BCRC 21394 / JCM 1990 / NBRC 0083 / IGC 2968) (Yeast).